Reading from the N-terminus, the 1251-residue chain is MPKINSFNYNDPVNDRTILYIKPGGCQEFYKSFNIMKNIWIIPERNVIGTTPQDFHPPTSLKNGDSSYYDPNYLQSDEEKDRFLKIVTKIFNRINNNLSGGILLEELSKANPYLGNDNTPDNQFHIGDASAVEIKFSNGSQDILLPNVIIMGAEPDLFETNSSNISLRNNYMPSNHRFGSIAIVTFSPEYSFRFNDNCMNEFIQDPALTLMHELIHSLHGLYGAKGITTKYTITQKQNPLITNIRGTNIEEFLTFGGTDLNIITSAQSNDIYTNLLADYKKIASKLSKVQVSNPLLNPYKDVFEAKYGLDKDASGIYSVNINKFNDIFKKLYSFTEFDLRTKFQVKCRQTYIGQYKYFKLSNLLNDSIYNISEGYNINNLKVNFRGQNANLNPRIITPITGRGLVKKIIRFCKNIVSVKGIRKSICIEINNGELFFVASENSYNDDNINTPKEIDDTVTSNNNYENDLDQVILNFNSESAPGLSDEKLNLTIQNDAYIPKYDSNGTSDIEQHDVNELNVFFYLDAQKVPEGENNVNLTSSIDTALLEQPKIYTFFSSEFINNVNKPVQAALFVSWIQQVLVDFTTEANQKSTVDKIADISIVVPYIGLALNIGNEAQKGNFKDALELLGAGILLEFEPELLIPTILVFTIKSFLGSSDNKNKVIKAINNALKERDEKWKEVYSFIVSNWMTKINTQFNKRKEQMYQALQNQVNAIKTIIESKYNSYTLEEKNELTNKYDIKQIENELNQKVSIAMNNIDRFLTESSISYLMKIINEVKINKLREYDENVKTYLLNYIIQHGSILGESQQELNSMVTDTLNNSIPFKLSSYTDDKILISYFNKFFKRIKSSSVLNMRYKNDKYVDTSGYDSNININGDVYKYPTNKNQFGIYNDKLSEVNISQNDYIIYDNKYKNFSISFWVRIPNYDNKIVNVNNEYTIINCMRDNNSGWKVSLNHNEIIWTFEDNRGINQKLAFNYGNANGISDYINKWIFVTITNDRLGDSKLYINGNLIDQKSILNLGNIHVSDNILFKIVNCSYTRYIGIRYFNIFDKELDETEIQTLYSNEPNTNILKDFWGNYLLYDKEYYLLNVLKPNNFIDRRKDSTLSINNIRSTILLANRLYSGIKVKIQRVNNSSTNDNLVRKNDQVYINFVASKTHLFPLYADTATTNKEKTIKISSSGNRFNQVVVMNSVGNCTMNFKNNNGNNIGLLGFKADTVVASTWYYTHMRDHTNSNGCFWNFISEEHGWQEK.

His-212 contacts Zn(2+). Glu-213 serves as the catalytic Proton acceptor. Residues His-216 and Glu-251 each coordinate Zn(2+). Cys-412 and Cys-426 are joined by a disulfide. The interval 423-819 (KSICIEINNG…ELNSMVTDTL (397 aa)) is translocation domain (TD). The segment at 466–515 (NDLDQVILNFNSESAPGLSDEKLNLTIQNDAYIPKYDSNGTSDIEQHDVN) is belt. The interval 845-1067 (KRIKSSSVLN…EIQTLYSNEP (223 aa)) is N-terminus of receptor binding domain (N-RBD). The segment at 850–1251 (SSVLNMRYKN…ISEEHGWQEK (402 aa)) is receptor-binding domain (TD). Residues 1068-1251 (NTNILKDFWG…ISEEHGWQEK (184 aa)) are C-terminus of receptor binding domain (C-RBD). The Host ganglioside-binding motif motif lies at 1221-1224 (STWY).

It belongs to the peptidase M27 family. As to quaternary structure, heterodimer; disulfide-linked heterodimer of a light chain (LC) and a heavy chain (HC); cleavage occurs after bacterial export by host proteases. The LC has the proteolytic/pharmacological activity, while the N- and C-terminal of the HC mediate channel formation and toxin binding, respectively. Oligomerizes in the presence of coreceptor ganglioside GT1b between pH 4.4 and 8.0; it might oligomerize on host cell surface. Interacts with host synaptic vesicle glycoproteins SV2A and SV2B. HC interacts with a complex including at least host SV2 and synaptotagmin-1 (SYT1); copurification depends on glycosylation of SV2. The cofactor is Zn(2+).

It is found in the secreted. It localises to the host cytoplasm. The protein resides in the host cytosol. The protein localises to the host synapse. Its subcellular location is the host presynaptic cell membrane. It is found in the host cytoplasmic vesicle. It localises to the host secretory vesicle. The protein resides in the host synaptic vesicle membrane. The catalysed reaction is Limited hydrolysis of proteins of the neuroexocytosis apparatus, synaptobrevins, SNAP25 or syntaxin. No detected action on small molecule substrates.. Its activity is regulated as follows. Proteolysis of SNAP25 by whole toxin inhibited by dipicolinic acid, 1,10-phenanthroline and EDTA. In terms of biological role, botulinum toxin causes flaccid paralysis by inhibiting neurotransmitter (acetylcholine) release from the presynaptic membranes of nerve terminals of eukaryotic host skeletal and autonomic nervous system, with frequent heart or respiratory failure. Precursor of botulinum neurotoxin E which has 2 coreceptors; complex polysialylated gangliosides found on neural tissue and specific membrane-anchored proteins found in synaptic vesicles. Receptor proteins are exposed on host presynaptic cell membrane during neurotransmitter release, when the toxin heavy chain (HC) binds to them. Upon synaptic vesicle recycling the toxin is taken up via the endocytic pathway. When the pH of the toxin-containing endosome drops a structural rearrangement occurs so that the N-terminus of the HC forms pores that allows the light chain (LC) to translocate into the cytosol. Once in the cytosol the disulfide bond linking the 2 subunits is reduced and LC cleaves its target protein on synaptic vesicles, preventing their fusion with the cytoplasmic membrane and thus neurotransmitter release. Electrical stimulation increases uptake of toxin, probably by transiently exposing a receptor found in eukaryotic target synaptic vesicles. Uses the large lumenal domain of synaptic vesicle glycoproteins 2A and 2B (SV2A and SV2B) but not SV2C as receptor; an N-linked glycan of SV2 is essential for receptor function. Host cell gangliosides are also required for neurotoxin uptake and full toxicity. BoNT/E is a 'coincidence detector'; it requires simultaneous binding to coreceptor GT1b and low pH to transform into a membrane-bound, oligomeric channel. Requires trypsinization and reduction before it can be used in assays in vitro. Has proteolytic activity. After translocation into the eukaryotic host cytosol, inhibits neurotransmitter release by acting as a zinc endopeptidase that catalyzes the hydrolysis of the '180-Arg-|-Ile-181' bond in SNAP25. Hydrolyzes the '185-Arg-|-Ile-186' bond of mouse SNAP23, but not in human which has a different sequence. Recognizes the '146-Met--Asp-186' region of SNAP25. The reaction mechanism probably has a nucleophilic water held in place by Glu-213. Reduction of the interchain disulfide bond occurs in the host cytosol and probably prevents retrotranslocation into the synaptic vesicle. Functionally, responsible for host epithelial cell transcytosis, host nerve cell targeting and translocation of light chain (LC) into host cytosol. Composed of 3 subdomains; the translocation domain (TD), and N-terminus and C-terminus of the receptor-binding domain (RBD). The RBD is responsible for the adherence of the toxin to the cell surface. It probably simultaneously recognizes 2 coreceptors; polysialated gangliosides and either of the receptor proteins SV2A and SV2B in close proximity on host synaptic vesicles. The N-terminus of the TD wraps an extended belt around the perimeter of the light chain (LC), protecting Zn(2+) in the active site. The belt may also prevent premature LC dissociation from the translocation channel and protect toxin prior to translocation. The TD inserts into synaptic vesicle membrane to allow translocation into the host cytosol. Responsible for adherence of the toxin to the cell surface; HC alone prevents uptake of whole toxin by neural cells, and delays paralysis onset by 154%. Significantly decreases uptake and toxicity of whole BoNT/E, but also interferes with uptake of BoNT/C; binds GT1b in vitro. Binds to synaptic vesicle glycoproteins SV2A and SV2B which serve as coreceptors with gangliosides. Interaction with SV2 proteins requires SV2 glycosylation. HC alone significantly decreases uptake and toxicity of whole BoNT/E. HC is responsible for translocation of LC into the host cytosol; an intact disulfide bond between the 2 subunits is required for translocation, which is reduced upon contact with the host cytosol. The polypeptide is Botulinum neurotoxin type E (Clostridium botulinum).